A 527-amino-acid chain; its full sequence is MYQPEDDNNSDVTSDDDMTRNRRESSPPHSVHSFSGDRDWDRRGRSRDMEPRDRWSHTRNPRSRMPPRDLSLPVVAKTSFEMDREDDRDSRAYESRSQDAESYQNVVDLAEDRKPHNTIQDNMENYRKLLSLGFLAQDSVPAEKRNTEMLDNLPSAGSQFPDFKHLGTFLVFEELVTFEDVLVDFSPEELSSLSAAQRNLYREVMLENYRNLVSLGHQFSKPDIISRLEEEESYAMETDSRHTVICQGESHDDPLEPHQGNQEKLLTPITMNDPKTLTPERSYGSDEFERSSNLSKQSKDPLGKDPQEGTAPGICTSPQSASQENKHNRCEFCKRTFSTQVALRRHERIHTGKKPYECKQCAEAFYLMPHLNRHQKTHSGRKTSGCNEGRKPSVQCANLCERVRIHSQEDYFECFQCGKAFLQNVHLLQHLKAHEAARVLPPGLSHSKTYLIRYQRKHDYVGERACQCCDCGRVFSRNSYLIQHYRTHTQERPYQCQLCGKCFGRPSYLTQHYQLHSQEKTVECDHC.

The span at 1-16 (MYQPEDDNNSDVTSDD) shows a compositional bias: acidic residues. Residues 1 to 104 (MYQPEDDNNS…SRSQDAESYQ (104 aa)) form a disordered region. 3 stretches are compositionally biased toward basic and acidic residues: residues 17-26 (DMTRNRRESS), 35-56 (SGDR…DRWS), and 80-99 (FEMD…RSQD). Positions 176 to 246 (VTFEDVLVDF…ETDSRHTVIC (71 aa)) constitute a KRAB domain. A disordered region spans residues 247–322 (QGESHDDPLE…GICTSPQSAS (76 aa)). The span at 259-275 (QGNQEKLLTPITMNDPK) shows a compositional bias: polar residues. Positions 297–307 (QSKDPLGKDPQ) are enriched in basic and acidic residues. 5 consecutive C2H2-type zinc fingers follow at residues 328-350 (NRCE…ERIH), 356-378 (YECK…QKTH), 412-434 (FECF…LKAH), 466-488 (CQCC…YRTH), and 494-516 (YQCQ…YQLH).

This sequence belongs to the krueppel C2H2-type zinc-finger protein family. In terms of tissue distribution, highest levels of expression in adult testis; modest levels in fetal kidney and brain.

It localises to the nucleus. Functionally, may be involved in transcriptional regulation. In Homo sapiens (Human), this protein is Zinc finger imprinted 2 (ZIM2).